Here is an 849-residue protein sequence, read N- to C-terminus: DNA mismatch repair protein MutS (849 aa).

ATP is bound at residue 602-609 (GPNMSGKS).

This sequence belongs to the DNA mismatch repair MutS family.

Its function is as follows. This protein is involved in the repair of mismatches in DNA. It is possible that it carries out the mismatch recognition step. This protein has a weak ATPase activity. The polypeptide is DNA mismatch repair protein MutS (Streptococcus sanguinis (strain SK36)).